The chain runs to 137 residues: Sporulation-specific cell division protein SsgB (137 aa).

It belongs to the SsgA family. In terms of assembly, interacts with SsgA. Interacts with FtsZ (via N-terminus).

It is found in the cell septum. Its function is as follows. Involved in sporulation-specific cell division. Required for early stages of sporulation. Important in the process of growth cessation prior to sporulation-specific cell division. Recruits cell division protein FtsZ to the future septum sites and tethers the contractile ring structure (Z ring) to the cytoplasmic membrane during sporulation. Stimulates polymerization and filament length of FtsZ in vitro. In Streptomyces coelicolor (strain ATCC BAA-471 / A3(2) / M145), this protein is Sporulation-specific cell division protein SsgB.